We begin with the raw amino-acid sequence, 382 residues long: Alanine racemase 1 (382 aa).

Lys-39 serves as the catalytic Proton acceptor; specific for D-alanine. The residue at position 39 (Lys-39) is an N6-(pyridoxal phosphate)lysine. Residue Arg-138 participates in substrate binding. Tyr-265 functions as the Proton acceptor; specific for L-alanine in the catalytic mechanism. Met-312 contacts substrate.

The protein belongs to the alanine racemase family. The cofactor is pyridoxal 5'-phosphate.

The enzyme catalyses L-alanine = D-alanine. Its pathway is amino-acid biosynthesis; D-alanine biosynthesis; D-alanine from L-alanine: step 1/1. In terms of biological role, catalyzes the interconversion of L-alanine and D-alanine. May also act on other amino acids. The sequence is that of Alanine racemase 1 (alr1) from Staphylococcus aureus (strain NCTC 8325 / PS 47).